The primary structure comprises 573 residues: MATLAAPPPPLGESGNSNSVSRITREGKKITYKLNIMQQPKRARACGQGSKSHTDRRPVDPPPVIELNIFESDPHDDSNKTDITFVYNANFFLFATLEPERPIATGKLMTNQGSPVLTGVPVAGVAYLDKPNRAGYFIFPDLSVRNEGSYRFSFHLFEQIKDPKDATEGTQPMPSPVPGKLSSPQEFLEFRLEVISNPFIVYSAKKFPGLTTSTPISRMIAEQGCRVRIRRDVRMRRRGDKRTEDYDYDNERGYNNRRPDQYAGSDAYANAPERPRSTSISTNMDPYSYPSRRPSAVEYGQPIAQPYQRPMASTPAPSSTPIPAPIPMPGPVALPPSTPSPASAHAPAPPSVPLAAPPPLHTPSYQSHLSFGATQTQYPAPQLSHIPQQTTTPTHPYSPRSSISHSRNQSISEYEPSMGYPGSQTRLSAERPSYGQPSQTTSLPPLRHSLEPSVNSRSKTPSNMITSLPPIQSLSELPSTTSQPSSAIGSSPANEPGPRLWETNSMLSKRTYEESFGHDDRPLYNGMRPDSESYPGGMQRRPSYERSSLLDGPDQMAYKRANGRMVSKPATMR.

Over residues 1 to 11 the composition is skewed to pro residues; it reads MATLAAPPPPL. 2 disordered regions span residues 1-24 and 39-63; these read MATLAAPPPPLGESGNSNSVSRIT and QPKRARACGQGSKSHTDRRPVDPPP. Residues 27–230 form the Velvet domain; the sequence is GKKITYKLNI…AEQGCRVRIR (204 aa). Residues 41–46 carry the Nuclear localization signal motif; the sequence is KRARAC. T167 and T170 each carry phosphothreonine. Position 183 is a phosphoserine (S183). Disordered regions lie at residues 236-295, 307-367, and 384-573; these read RRRG…RRPS, YQRP…SYQS, and SHIP…ATMR. Over residues 241-260 the composition is skewed to basic and acidic residues; the sequence is KRTEDYDYDNERGYNNRRPD. Y254 carries the post-translational modification Phosphotyrosine. 2 stretches are compositionally biased toward pro residues: residues 318–339 and 347–361; these read SSTPIPAPIPMPGPVALPPSTP and PAPPSVPLAAPPPLH. Residues 387 to 412 show a composition bias toward low complexity; sequence PQQTTTPTHPYSPRSSISHSRNQSIS. The span at 452-493 shows a compositional bias: polar residues; it reads PSVNSRSKTPSNMITSLPPIQSLSELPSTTSQPSSAIGSSPA. Residues 459–498 form a PEST region; sequence KTPSNMITSLPPIQSLSELPSTTSQPSSAIGSSPANEPGP. Basic and acidic residues predominate over residues 510 to 522; that stretch reads RTYEESFGHDDRP.

This sequence belongs to the velvet family. VeA subfamily. Component of the heterotrimeric velvet complex composed of laeA, veA and velB; VeA acting as a bridging protein between laeA and velB. Interacts with the light-sensing phytochrome fphA. Interacts with llmF. In terms of processing, phosphorylated at Thr-167, Thr-170, Ser-183 and Tyr-254. Thr-167 should be phosphorylated and T170 and S183 should be dephosphorylated to achieve light induction of conidiation. Phosphorylation of Ser-183 and Tyr-254 influence sterigmatocystin production in a light-independent manner. Phosphorylation of Thr-167 and Thr-170 modulates expression of veA.

The protein resides in the nucleus. It localises to the cytoplasm. In terms of biological role, component of the velvet transcription factor complex that controls sexual/asexual developmental ratio in response to light, promoting sexual development in the darkness while stimulating asexual sporulation under illumination. The velvet complex acts as a global regulator for secondary metabolite gene expression. Controls the expression of the sterigmatocystin and penicillin gene clusters. Represses the cryptic ors gene cluster producing orsellinic acid and its F9775 derivatives in a laeA-independent manner. Required for full induction of faoA gene expression by fructosyl amines. Positively regulates the expression of the early sexual development gene esdC. Controls the expression of mannoprotein mnpA. This chain is Developmental and secondary metabolism regulator veA, found in Emericella nidulans (strain FGSC A4 / ATCC 38163 / CBS 112.46 / NRRL 194 / M139) (Aspergillus nidulans).